The sequence spans 57 residues: Ribosome modulation factor 2 (57 aa).

The tract at residues 1-24 is disordered; sequence MKRQKRDKLGRAHSNGYQAGLGGK.

Belongs to the ribosome modulation factor family.

The protein localises to the cytoplasm. Its function is as follows. During stationary phase, converts 70S ribosomes to an inactive dimeric form (100S ribosomes). The chain is Ribosome modulation factor 2 from Colwellia psychrerythraea (strain 34H / ATCC BAA-681) (Vibrio psychroerythus).